The sequence spans 172 residues: MDRAQKEKVVEELGQIFESSGVVVVAHYTGLTVSEMQDLRARARDAGGSVRVAKNRLAKIALEGKPCESMSDLLTGMTVLTYSEDPVAAAKVAEDFAKENKKFEILGGAMGENALDRAGVEAVSKMPSREELIASIVGCIGAPASNIAGAIGAPASNIASILSTIEEKAEAA.

This sequence belongs to the universal ribosomal protein uL10 family. As to quaternary structure, part of the ribosomal stalk of the 50S ribosomal subunit. The N-terminus interacts with L11 and the large rRNA to form the base of the stalk. The C-terminus forms an elongated spine to which L12 dimers bind in a sequential fashion forming a multimeric L10(L12)X complex.

Functionally, forms part of the ribosomal stalk, playing a central role in the interaction of the ribosome with GTP-bound translation factors. The protein is Large ribosomal subunit protein uL10 of Ruegeria sp. (strain TM1040) (Silicibacter sp.).